The chain runs to 362 residues: Histidinol-phosphate aminotransferase (362 aa).

K210 is modified (N6-(pyridoxal phosphate)lysine).

Belongs to the class-II pyridoxal-phosphate-dependent aminotransferase family. Histidinol-phosphate aminotransferase subfamily. In terms of assembly, homodimer. It depends on pyridoxal 5'-phosphate as a cofactor.

The catalysed reaction is L-histidinol phosphate + 2-oxoglutarate = 3-(imidazol-4-yl)-2-oxopropyl phosphate + L-glutamate. The protein operates within amino-acid biosynthesis; L-histidine biosynthesis; L-histidine from 5-phospho-alpha-D-ribose 1-diphosphate: step 7/9. The chain is Histidinol-phosphate aminotransferase from Rhodopirellula baltica (strain DSM 10527 / NCIMB 13988 / SH1).